A 191-amino-acid chain; its full sequence is Protein Ves (191 aa).

The protein belongs to the Ves family.

This chain is Protein Ves, found in Escherichia coli O8 (strain IAI1).